We begin with the raw amino-acid sequence, 530 residues long: Histone-arginine methyltransferase CARMER (530 aa).

Residues 141–450 (ASQYFQFYGY…QSYDVTIDLH (310 aa)) enclose the SAM-dependent MTase PRMT-type domain. Q154, R163, G187, E209, E238, and T266 together coordinate S-adenosyl-L-methionine. R501 carries the asymmetric dimethylarginine; by autocatalysis modification.

It belongs to the class I-like SAM-binding methyltransferase superfamily. Protein arginine N-methyltransferase family. Homodimer. Post-translationally, the dimethylated protein is the major form.

The protein localises to the cytoplasm. The protein resides in the nucleus. The catalysed reaction is L-arginyl-[protein] + 2 S-adenosyl-L-methionine = N(omega),N(omega)-dimethyl-L-arginyl-[protein] + 2 S-adenosyl-L-homocysteine + 2 H(+). Functionally, methylates (mono- and asymmetric dimethylation) the guanidino nitrogens of arginyl residues in proteins. May methylate histone H3 at 'Arg-17' and activate transcription via chromatin remodeling. This is Histone-arginine methyltransferase CARMER (Art4) from Drosophila sechellia (Fruit fly).